Reading from the N-terminus, the 662-residue chain is Pollen receptor-like kinase 1 (662 aa).

Positions 1–31 (MPPMQARTLSVYNVMVPLVCLLLFFSTPTHG) are cleaved as a signal peptide. At 32-256 (LSDSEAILKF…ARPKSSSRGP (225 aa)) the chain is on the extracellular side. LRR repeat units follow at residues 79–98 (QMENLELSGSIDIEALSGLT), 99–121 (SLRTLSFMNNKFEGPFPDFKKLA), 122–144 (ALKSLYLSNNQFGGDIPGDAFEG), 147–169 (WLKKVHLAQNKFTGQIPSSVAKL), 171–191 (KLLELRLDGNQFTGEIPEFEH), and 192–214 (QLHLLNLSNNALTGPIPESLSMT). Residue N197 is glycosylated (N-linked (GlcNAc...) asparagine). The interval 233–253 (ECDSPYIEHPPQSEARPKSSS) is disordered. A helical transmembrane segment spans residues 257–277 (LVITAIVAALTILIILGVIFL). Over 278–662 (LNRSYKNKKP…GESCESISFA (385 aa)) the chain is Cytoplasmic. The segment at 288-330 (RLAVETGPSSLQKKTGIREADQSRRDRKKADHRKGSGTTKRMG) is disordered. In terms of domain architecture, Protein kinase spans 357-639 (KASAEILGSG…EREGDDDDFY (283 aa)). S359 carries the phosphoserine modification. ATP-binding positions include 363-371 (LGSGCFGAS) and K385. S437 is subject to Phosphoserine. Position 457 is a phosphothreonine (T457). Y527 carries the phosphotyrosine modification. The segment at 636–662 (DDFYSTYVSETDGRSSKGESCESISFA) is disordered. The span at 646 to 655 (TDGRSSKGES) shows a compositional bias: basic and acidic residues.

It belongs to the protein kinase superfamily. Ser/Thr protein kinase family. In terms of assembly, interacts in vitro with ROPGEF1 (via PRONE domain). In terms of tissue distribution, expressed in pollen and/or in flowers, but not in leaves.

It localises to the cell membrane. It carries out the reaction L-seryl-[protein] + ATP = O-phospho-L-seryl-[protein] + ADP + H(+). The catalysed reaction is L-threonyl-[protein] + ATP = O-phospho-L-threonyl-[protein] + ADP + H(+). In terms of biological role, receptor-like kinase involved in the control of pollen germination and pollen tube polar growth. The polypeptide is Pollen receptor-like kinase 1 (Arabidopsis thaliana (Mouse-ear cress)).